Reading from the N-terminus, the 638-residue chain is Threonine--tRNA ligase (638 aa).

The TGS domain maps to 1–61; the sequence is MPVVTLPDGS…EADAEVALVT (61 aa). A catalytic region spans residues 242 to 533; the sequence is DHRKLGKALD…LTEHYAGQYP (292 aa). 3 residues coordinate Zn(2+): cysteine 333, histidine 384, and histidine 510.

Belongs to the class-II aminoacyl-tRNA synthetase family. Homodimer. Zn(2+) serves as cofactor.

The protein resides in the cytoplasm. It carries out the reaction tRNA(Thr) + L-threonine + ATP = L-threonyl-tRNA(Thr) + AMP + diphosphate + H(+). Functionally, catalyzes the attachment of threonine to tRNA(Thr) in a two-step reaction: L-threonine is first activated by ATP to form Thr-AMP and then transferred to the acceptor end of tRNA(Thr). Also edits incorrectly charged L-seryl-tRNA(Thr). This chain is Threonine--tRNA ligase, found in Methylococcus capsulatus (strain ATCC 33009 / NCIMB 11132 / Bath).